The following is a 324-amino-acid chain: HTH-type transcriptional regulator CysB (324 aa).

In terms of domain architecture, HTH lysR-type spans 1-59; it reads MKLQQLRYIVEVVNHNLNVSSTAEGLYTSQPGISKQVRMLEDELGIQIFARSGKHLTQV. Positions 19–38 form a DNA-binding region, H-T-H motif; it reads VSSTAEGLYTSQPGISKQVR.

Belongs to the LysR transcriptional regulatory family. As to quaternary structure, homotetramer.

It is found in the cytoplasm. Its function is as follows. This protein is a positive regulator of gene expression for the cysteine regulon, a system of 10 or more loci involved in the biosynthesis of L-cysteine from inorganic sulfate. The inducer for CysB is N-acetylserine. CysB inhibits its own transcription. The sequence is that of HTH-type transcriptional regulator CysB (cysB) from Salmonella typhimurium (strain LT2 / SGSC1412 / ATCC 700720).